The primary structure comprises 1053 residues: Prestalk protein (1053 aa).

A signal peptide spans 1-18 (MNKIYLILILFTFVGIIL). Residues 38–60 (NKCTLDKCNNGCCSNTPININDN) form an X-1 repeat. A 41 X 24 AA tandem repeats, Cys-rich region spans residues 38-1019 (NKCTLDKCNN…VHTPVDCNDN (982 aa)). The X-2 repeat unit spans residues 61–84 (DECTVDTCNPKTGISHTPVNCDDG). Residues 85–108 (NSCTADSCLCGKGCQHVPIACDDN) form an X-3 repeat. One copy of the A-1 repeat lies at 109-132 (NACTVDSCSNSTGCCHTPLSCDDN). Residues 133–156 (NPCTVDSCSNSTGCCHTPINVDDH) form an A-2 repeat. The stretch at 157–180 (NACTEDKCTQSGGVTHTPIACDDK) is one B-1 repeat. An A-3 repeat occupies 181 to 204 (NACTVDSCSNSTGCCHTPLSCDDN). An A-4 repeat occupies 205 to 228 (NACTVDSCSNSTGCVHTPINVDDH). One copy of the B-2 repeat lies at 229–252 (NACTEDKCTQSGGVTHTPIACDDK). The stretch at 253–276 (NACTADSCSNSTGCCHTPITCDDN) is one A-5 repeat. An A-6 repeat occupies 277 to 300 (NACTVDSCSNSTGCCHTPINVDDN). A B-3 repeat occupies 301-324 (NACTEDKCTQSGGVTHTPIACDDK). The A-7 repeat unit spans residues 325-348 (NACTVDSCSNSTGCVHTPLACDDK). An A-8 repeat occupies 349 to 372 (NPCTVDSCSNSTGCCHTPINVDDN). A B-4 repeat occupies 373-396 (NACTEDKCTQSGGVTHTPINCDDN). An A-9 repeat occupies 397-420 (NKCTVDSCSNSTGCCHTPMSCDDN). One copy of the A-10 repeat lies at 421 to 444 (NPCTVDSCSNSTGCVHTPINVDDN). A B-5 repeat occupies 445–468 (NACTEDKCTQNGGVTHTPIACDDK). The A-11 repeat unit spans residues 469 to 492 (NACTVDSCSNSTGCCHTPLKCDDN). The stretch at 493 to 516 (NACTVDSCSNSTGCVHTPINVDDN) is one A-12 repeat. A B-6 repeat occupies 517–540 (NACTEDKCTQSGGVTHTPISCDDK). One copy of the A-13 repeat lies at 541–564 (NPCTIDSCSNSTGCVHTPMSCDDR). One copy of the X-4 repeat lies at 565 to 588 (NPCTSDFCSWEKGCQHVALSCNDF). An A-14 repeat occupies 589–612 (NACTMDSCSNSTGCTHTPIACDDK). The stretch at 613–636 (NACTVDSCSNSTGCVHTPLTCDDN) is one A-15 repeat. The stretch at 637–660 (NPCTVDSCSNSTGCCHTPINVDDH) is one A-16 repeat. One copy of the B-7 repeat lies at 661 to 684 (NACTEDKCTQSGGVTHTPIACDDK). One copy of the A-17 repeat lies at 685–708 (NACTVDSCSNSTGCCHTPLSCDDN). The stretch at 709-732 (NACTVDSCSNSTGCVHTPINVDDN) is one A-18 repeat. Residues 733–756 (NACTEDKCTQNGGVTHTPIACDDK) form a B-8 repeat. An A-19 repeat occupies 757–780 (NACTVDSCSNSTGCCHTPLKCDDN). An A-20 repeat occupies 781–804 (NPCTVDSCSNSTGCVHTPMNVDDN). One copy of the B-9 repeat lies at 805–828 (NACTEDKCTQNGGVTHTPIRCDDL). An A-21 repeat occupies 829–852 (NSCTADSCSNSTGCVHTPINCDDN). The A-22 repeat unit spans residues 853–876 (NKCTADSCSNSTGCCHTPISCDDN). Residues 877–900 (NPCTVDSCSNSTGCCHTPINVDDN) form an A-23 repeat. A B-10 repeat occupies 901 to 924 (NPCTEDKCTQSGGVTHTPIGCNDN). One copy of the A-24 repeat lies at 925 to 948 (NACTVDSCSNSTGCTHTPMKCDDN). The stretch at 949–971 (NPCTIDSCSNSTGCVHTPMNCDD) is one A-25 repeat. Residues 972–995 (GNFCTLDSCCSTGCTHTPIIIDDN) form an A-26 repeat. The A-27 repeat unit spans residues 996–1019 (NPCTVDSCCNSTGVVHTPVDCNDN).

It localises to the secreted. The protein localises to the extracellular space. The protein resides in the extracellular matrix. Functionally, component of the stalk tube, the matrix that encases stalk cells. The protein is Prestalk protein (ecmB) of Dictyostelium discoideum (Social amoeba).